A 117-amino-acid polypeptide reads, in one-letter code: Small ribosomal subunit protein bS6 (117 aa).

The disordered stretch occupies residues 96–117 (HDEGPSVQMQKRDEREGRRERR).

It belongs to the bacterial ribosomal protein bS6 family.

In terms of biological role, binds together with bS18 to 16S ribosomal RNA. This chain is Small ribosomal subunit protein bS6, found in Jannaschia sp. (strain CCS1).